The chain runs to 816 residues: Sodium/hydrogen exchanger 1 (816 aa).

The Extracellular portion of the chain corresponds to 1-98 (MLLWSAVRGL…FPVLGIDYTH (98 aa)). Polar residues predominate over residues 37 to 50 (LQLSPTDSTTPDSQ). The tract at residues 37–79 (LQLSPTDSTTPDSQPSRERSIGDVTTAPPEVTPESRPVNRSVT) is disordered. The N-linked (GlcNAc...) asparagine glycan is linked to asparagine 75. Residues 99–121 (VRTPFEISLWILLACLMKIGFHV) traverse the membrane as a helical segment. The Cytoplasmic portion of the chain corresponds to 122-130 (IPTISSIVP). The chain crosses the membrane as a helical span at residues 131 to 148 (ESCLLIVVGLLVGGLIKG). Over 149–158 (VGEKPPFLQS) the chain is Extracellular. The helical transmembrane segment at 159-176 (EVFFLFLLPPIILDAGYF) threads the bilayer. Residues 177–186 (LPLRQFTENL) lie on the Cytoplasmic side of the membrane. A helical membrane pass occupies residues 187 to 215 (GTILIFAVVGTLWNAFFLGGLMYAVCLVG). Topologically, residues 216-222 (GEQINNI) are extracellular. The chain crosses the membrane as a helical span at residues 223 to 249 (GLLDNLLFGSIISAVDPVAVLAVFEEI). Residues 250–252 (HIN) are Cytoplasmic-facing. A helical transmembrane segment spans residues 253–283 (ELLHILVFGESLLNDAVTVVLYHLFEEFANY). Residues 284–287 (DHVG) lie on the Extracellular side of the membrane. Residues 288 to 322 (IVDIVLGFLSFFVVALGGVFVGVVYGVIAAFTSRF) traverse the membrane as a helical segment. Residues 323-328 (TAHIRV) lie on the Cytoplasmic side of the membrane. The chain crosses the membrane as a helical span at residues 329-341 (IEPLFVFLYSYMA). Over 342-350 (YLSAELFHL) the chain is Extracellular. A helical transmembrane segment spans residues 351 to 371 (SGIMALIASGVVMRPYVEANI). Residues 372 to 373 (SH) lie on the Cytoplasmic side of the membrane. A helical membrane pass occupies residues 374-404 (KSHTTIKYFLKMWSSVSETLIFIFLGVSTVA). Topologically, residues 405-410 (GSHHWN) are extracellular. The chain crosses the membrane as a helical span at residues 411-438 (WTFVISTLLFCLIARVLGVLGLTWFINK). The Cytoplasmic portion of the chain corresponds to 439-444 (FRIVKL). A helical transmembrane segment spans residues 445-469 (TPKDQFIIAYGGLRGAIAFSLGYLL). Over 470-475 (DKKHFP) the chain is Extracellular. Residues 476–505 (MCDLFLTAIITVIFFTVFVQGMTIRPLVDL) traverse the membrane as a helical segment. Residues 503–545 (VDLLAVKKKQETKRSINEEIHTQFLDHLLTGIEDICGHYGHHH) are interaction with TESC. Topologically, residues 506–816 (LAVKKKQETK…EGEPFIPKGQ (311 aa)) are cytoplasmic. The PI(4,5)P2-binding region stretch occupies residues 509 to 516 (KKKQETKR). The segment at 515-545 (KRSINEEIHTQFLDHLLTGIEDICGHYGHHH) is interaction with CHP2. The segment at 540 to 545 (HYGHHH) is confers pH-dependent PI(4,5)P2 binding. The interval 552–560 (RFNKKYVKK) is PI(4,5)P2-binding region. Phosphoserine occurs at positions 599 and 602. Threonine 603 is modified (phosphothreonine). Phosphoserine occurs at positions 605 and 648. Residues 633–816 (KILRNNLQKT…EGEPFIPKGQ (184 aa)) form an interaction with TESC region. An interaction with CALM1 region spans residues 633 to 816 (KILRNNLQKT…EGEPFIPKGQ (184 aa)). An interaction with PPP3CA region spans residues 684–687 (LTVP). Serine 693, serine 697, and serine 703 each carry phosphoserine. Residues 715 to 720 (PVITID) are interaction with PPP3CA. Residues serine 723, serine 726, serine 729, serine 786, serine 788, and serine 797 each carry the phosphoserine modification. The disordered stretch occupies residues 748-816 (PRVAEEAAEE…EGEPFIPKGQ (69 aa)). Residues 783–792 (PSDSPSSQRM) show a composition bias toward polar residues.

It belongs to the monovalent cation:proton antiporter 1 (CPA1) transporter (TC 2.A.36) family. As to quaternary structure, homodimer; dimerization is crucial for its function. Oligomer. Interacts with CALM in a calcium-dependent manner. Interacts with TESC. Interacts (via the juxtamembrane region of the cytoplasmic C-terminal domain) with CHP1; the interaction occurs at the plasma membrane in a calcium-dependent manner. Interacts with CHP2; the interaction occurs in a calcium-dependent manner. Interacts with EZR; regulates the cytoskeletal interactions of SLC9A1 and promotes stress fiber formation. Ubiquitinated, leading to its degradation by the proteasome. Ubiquitination is reduced by CHP1. In terms of processing, O-glycosylated. Post-translationally, palmitoylated; may play a major role in SLC9A1 regulation. Phosphorylation at Ser-648 by AKT1 reduces SLC9A1 binding to CALM1. As to expression, kidney and intestine.

The protein resides in the cell membrane. It is found in the basolateral cell membrane. The enzyme catalyses Na(+)(in) + H(+)(out) = Na(+)(out) + H(+)(in). It carries out the reaction Li(+)(out) + H(+)(in) = Li(+)(in) + H(+)(out). The catalysed reaction is Li(+)(in) + Na(+)(out) = Li(+)(out) + Na(+)(in). Activated at acidic pHs. Inhibited by cariporide and eniporide. Phosphatidylinositol 4,5-bisphosphate (PI(4,5)P2) and phosphatidylinositol 3,4,5-trisphosphate (PI(3,4,5)P3) bind and differentially regulate SLC9A1 activity. Functionally, electroneutral Na(+) /H(+) antiporter that extrudes Na(+) in exchange for external protons driven by the inward sodium ion chemical gradient, protecting cells from acidification that occurs from metabolism. Exchanges intracellular H(+) ions for extracellular Na(+) in 1:1 stoichiometry. Plays a key role in maintening intracellular pH neutral and cell volume, and thus is important for cell growth, proliferation, migration and survival. In addition, can transport lithium Li(+) and functions also as a Na(+)/Li(+) antiporter. SLC9A1 also functions in membrane anchoring and organization of scaffolding complexes that coordinate signaling inputs. The chain is Sodium/hydrogen exchanger 1 (SLC9A1) from Oryctolagus cuniculus (Rabbit).